We begin with the raw amino-acid sequence, 496 residues long: MADESETAVKLPAPSLPLMMEGNGNGHEHCSDCENEEDISHNRGGLSPANDTGAKKKKKKQKKKKEKGNDMDSTQDQPVKMNSLPAERIQEIQKAIELFSVGQGPAKTMEEASKRSYQFWDTQPVPKLGEVVNTHGPVEPDKDNIRQEPYTLPQGFTWDALDLGDRGVLKELYTLLNENYVEDDDNMFRFDYSPEFLLWALRPPGWLPQWHCGVRVVSSRKLVGFISAIPANIHIYDTEKKMVEINFLCVHKKLRSKRVAPVLIREITRRVHLEGIFQAVYTAGVVLPKPVGTCRYWHRSLNPRKLIEVKFSHLSRNMTMQRTMKLYRLPETPKTAGLRPMEKKDIPVVHQLLSRYLKQFNLTPVMNQEEVEHWFYPQENIIDTFVVENANGEVTDFLSFYTLPSTIMNHPTHKSLKAAYSFYNVHTQTPLLDLMSDALVLAKMKGFDVFNALDLMENKTFLEKLKFGIGDGNLQYYLYNWKCPSMGAEKVGLVLQ.

The tract at residues 1 to 81 (MADESETAVK…DSTQDQPVKM (81 aa)) is disordered. S31 and S47 each carry phosphoserine. The segment covering 55 to 66 (KKKKKKQKKKKE) has biased composition (basic residues). A Phosphoserine modification is found at S83. Q118, F119, W120, F247, L248, C249, V250, S256, R258, V259, and A260 together coordinate tetradecanoyl-CoA.

The protein belongs to the NMT family.

It localises to the cytoplasm. The protein resides in the cytosol. It is found in the membrane. It carries out the reaction N-terminal glycyl-[protein] + tetradecanoyl-CoA = N-tetradecanoylglycyl-[protein] + CoA + H(+). The enzyme catalyses N-terminal glycyl-L-lysyl-[protein] + tetradecanoyl-CoA = N-terminal glycyl-(N(6)-tetradecanoyl)-L-lysyl-[protein] + CoA + H(+). In terms of biological role, adds a myristoyl group to the N-terminal glycine residue of certain cellular and viral proteins. Also able to mediate N-terminal lysine myristoylation of proteins: catalyzes myristoylation of ARF6 on both 'Gly-2' and 'Lys-3'. Lysine myristoylation is required to maintain ARF6 on membranes during the GTPase cycle. The polypeptide is Glycylpeptide N-tetradecanoyltransferase 1 (Nmt1) (Rattus norvegicus (Rat)).